The following is a 100-amino-acid chain: uncharacterized protein (100 aa).

A signal peptide spans 1–17 (MTMKYFCSVMIAIALVG). C18 is lipidated: N-palmitoyl cysteine. C18 carries S-diacylglycerol cysteine lipidation.

It is found in the cell membrane. This is an uncharacterized protein from Salmonella paratyphi A (strain ATCC 9150 / SARB42).